Here is a 108-residue protein sequence, read N- to C-terminus: Protein phosphatase 1 regulatory subunit 1C (108 aa).

The disordered stretch occupies residues 25–108 (AEQIRKRRPT…ASEREEKWNH (84 aa)). Over residues 45–54 (NSPEIDEKRV) the composition is skewed to basic and acidic residues. Residues 55–73 (TNTQESQNASPKQRKQSVY) show a composition bias toward polar residues. The span at 99–108 (ASEREEKWNH) shows a compositional bias: basic and acidic residues.

It belongs to the protein phosphatase inhibitor 1 family.

The protein resides in the cytoplasm. May increase cell susceptibility to TNF-induced apoptosis. The protein is Protein phosphatase 1 regulatory subunit 1C (Ppp1r1c) of Mus musculus (Mouse).